The sequence spans 134 residues: Small ribosomal subunit protein uS9 (134 aa).

Residues serine 98–lysine 114 are compositionally biased toward basic and acidic residues. The interval serine 98–arginine 134 is disordered. Positions lysine 115 to arginine 134 are enriched in basic residues.

This sequence belongs to the universal ribosomal protein uS9 family.

This chain is Small ribosomal subunit protein uS9, found in Chlamydia caviae (strain ATCC VR-813 / DSM 19441 / 03DC25 / GPIC) (Chlamydophila caviae).